The sequence spans 208 residues: Uracil phosphoribosyltransferase (208 aa).

5-phospho-alpha-D-ribose 1-diphosphate-binding positions include arginine 78, arginine 103, and 130-138 (DPMLATGVS). Uracil contacts are provided by residues isoleucine 193 and 198–200 (GDA). Aspartate 199 contributes to the 5-phospho-alpha-D-ribose 1-diphosphate binding site.

It belongs to the UPRTase family. Requires Mg(2+) as cofactor.

The catalysed reaction is UMP + diphosphate = 5-phospho-alpha-D-ribose 1-diphosphate + uracil. The protein operates within pyrimidine metabolism; UMP biosynthesis via salvage pathway; UMP from uracil: step 1/1. Its activity is regulated as follows. Allosterically activated by GTP. Catalyzes the conversion of uracil and 5-phospho-alpha-D-ribose 1-diphosphate (PRPP) to UMP and diphosphate. The protein is Uracil phosphoribosyltransferase of Thermosipho africanus (strain TCF52B).